The sequence spans 164 residues: MRIIFLLIALICAGLVSYALYLQLADGLLPCPLCIFQRMAYWLVGITALFAFIHHPQRLGRRIYCGLIILFSLAGAIVAGRQAWLVRFPEAFECGISPEEAFLNELPLARWWPDMFEANGDCTDGTWQFLSLTIPDWSLLIFLAFSLIAGLLWRSRSISSSNLK.

Residues methionine 1–isoleucine 4 are Cytoplasmic-facing. The helical transmembrane segment at phenylalanine 5–tyrosine 21 threads the bilayer. Topologically, residues leucine 22–methionine 39 are periplasmic. Residues cysteine 31 and cysteine 34 are joined by a disulfide bond. A helical transmembrane segment spans residues alanine 40–proline 56. Over glutamine 57–arginine 62 the chain is Cytoplasmic. Residues isoleucine 63 to glycine 80 form a helical membrane-spanning segment. Residues arginine 81–aspartate 136 lie on the Periplasmic side of the membrane. The cysteines at positions 94 and 122 are disulfide-linked. The helical transmembrane segment at tryptophan 137 to serine 155 threads the bilayer. Residues arginine 156–lysine 164 are Cytoplasmic-facing.

The protein belongs to the DsbB family.

It localises to the cell inner membrane. Its function is as follows. Required for disulfide bond formation in some periplasmic proteins. Acts by oxidizing the DsbA protein. The sequence is that of Disulfide bond formation protein B from Nitrosomonas europaea (strain ATCC 19718 / CIP 103999 / KCTC 2705 / NBRC 14298).